The chain runs to 477 residues: Bifunctional protein HldE (477 aa).

Residues 1 to 320 (MKDSLPAFEK…SLSDTHHSET (320 aa)) are ribokinase. Residue 195–198 (NLHE) coordinates ATP. Asp-264 is an active-site residue. The cytidylyltransferase stretch occupies residues 346 to 477 (MTNGCFDILH…KIIENIMANQ (132 aa)).

This sequence in the N-terminal section; belongs to the carbohydrate kinase PfkB family. In the C-terminal section; belongs to the cytidylyltransferase family. Homodimer.

It catalyses the reaction D-glycero-beta-D-manno-heptose 7-phosphate + ATP = D-glycero-beta-D-manno-heptose 1,7-bisphosphate + ADP + H(+). The catalysed reaction is D-glycero-beta-D-manno-heptose 1-phosphate + ATP + H(+) = ADP-D-glycero-beta-D-manno-heptose + diphosphate. The protein operates within nucleotide-sugar biosynthesis; ADP-L-glycero-beta-D-manno-heptose biosynthesis; ADP-L-glycero-beta-D-manno-heptose from D-glycero-beta-D-manno-heptose 7-phosphate: step 1/4. It participates in nucleotide-sugar biosynthesis; ADP-L-glycero-beta-D-manno-heptose biosynthesis; ADP-L-glycero-beta-D-manno-heptose from D-glycero-beta-D-manno-heptose 7-phosphate: step 3/4. Its function is as follows. Catalyzes the phosphorylation of D-glycero-D-manno-heptose 7-phosphate at the C-1 position to selectively form D-glycero-beta-D-manno-heptose-1,7-bisphosphate. Catalyzes the ADP transfer from ATP to D-glycero-beta-D-manno-heptose 1-phosphate, yielding ADP-D-glycero-beta-D-manno-heptose. In Shewanella piezotolerans (strain WP3 / JCM 13877), this protein is Bifunctional protein HldE.